The primary structure comprises 391 residues: Aminoacetone oxidase (391 aa).

The FAD site is built by alanine 14, glutamate 33, isoleucine 134, glutamate 362, asparagine 374, and isoleucine 375.

Belongs to the BaiN/RdsA family. In terms of assembly, monomer. The cofactor is FAD.

In terms of biological role, flavoprotein that probably catalyzes the condensation of two molecules of aminoacetone to yield 3,6-dimethyl-2,5-dihydropyrazine, which is subsequently oxidized to 2,5-dimethylpyrazine. It could be involved in a microbial defense mechanism related to aminoacetone catabolism through a pathway yielding dimethylpyrazine derivatives instead of methylglyoxal. It has also low aminoacetone oxidase activity, and can produce hydrogen peroxide from aminoacetone. In addition, it shows very low L-amino acid oxidase activity, and can produce hydrogen peroxide from peptone and from seven amino acids, L-aspartate, L-tryptophan, L-lysine, L-isoleucine, L-arginine, L-asparagine and L-glutamine. It cannot use L-malate, oxaloacetate or alpha-aminobutyrate. Plays a role in antioxidant defense. The sequence is that of Aminoacetone oxidase from Streptococcus cristatus.